The chain runs to 349 residues: Protein AMBP (349 aa).

An N-terminal signal peptide occupies residues Met1 to Ala19. An N-linked (GlcNAc...) asparagine glycan is attached at Asn35. 3-hydroxy-L-kynurenine is bound by residues Cys52 and Lys110. Cysteines 90 and 187 form a disulfide. An N-linked (GlcNAc...) asparagine glycan is attached at Asn114. 3-hydroxy-L-kynurenine contacts are provided by Lys136 and Lys148. A glycan (O-linked (Xyl...) (chondroitin sulfate) serine) is linked at Ser214. 6 disulfides stabilise this stretch: Cys230–Cys280, Cys239–Cys263, Cys255–Cys276, Cys286–Cys336, Cys295–Cys319, and Cys311–Cys332. BPTI/Kunitz inhibitor domains follow at residues Cys230–Cys280 and Cys286–Cys336.

The protein in the N-terminal section; belongs to the calycin superfamily. Lipocalin family. As to quaternary structure, monomer. Homodimer. In plasma, it occurs as a monomer or dimer and in covalently-linked complexes with immunoglobulin A (IgA), ALB/albumin and F2/prothrombin. Chromophore-bound alpha-1-microglobulin interacts with the constant region of immunoglobulin A. Chromophore-bound alpha-1-microglobulin interacts with ALB with molar ratio 2:1 and 1:1; this interaction does not prevent fatty acid binding to ALB. Interacts with F2/prothrombin (via N-terminus) with molar ratio 2:1 and 1:1; this interaction does not prevent the activation of prothrombin to thrombin. Interacts with NDUFAB1, a subunit of mitochondrial complex I. Interacts with FN1. In terms of assembly, I-alpha-I plasma protease inhibitors are assembled from one or two heavy chains (HC) and one light chain, bikunin. Inter-alpha-inhibitor (I-alpha-I) is composed of ITIH1/HC1, ITIH2/HC2 and bikunin, and pre-alpha-inhibitor (P-alpha-I) of ITIH3/HC3 and bikunin. Interacts with TNFAIP6 (via Link domain). Monomer. Also occurs as a complex with tryptase in mast cells. The precursor is proteolytically processed into separately functioning proteins. In terms of processing, 3-hydroxykynurenine, an oxidized tryptophan metabolite that is common in biological fluids, reacts with Cys-53, Lys-111, Lys-137, and Lys-149 to form heterogeneous polycyclic chromophores including hydroxanthommatin. The reaction by alpha-1-microglobulin is autocatalytic; the human protein forms chromophore even when expressed in insect and bacterial cells. The chromophore can react with accessible cysteines forming non-reducible thioether cross-links with other molecules of alpha-1-microglobulin or with other proteins such as Ig alpha-1 chain C region 'Cys-352'. Post-translationally, heavy chains are interlinked with bikunin via a chondroitin 4-sulfate bridge to the C-terminal aspartate. Proteolytically cleaved by PRSS3 at Kunitz domain 2. As to expression, expressed by the liver and secreted in plasma.

It localises to the secreted. It is found in the endoplasmic reticulum. The protein localises to the cytoplasm. The protein resides in the cytosol. Its subcellular location is the cell membrane. It localises to the nucleus membrane. It is found in the mitochondrion inner membrane. The protein localises to the extracellular space. The protein resides in the extracellular matrix. In terms of biological role, antioxidant and tissue repair protein with reductase, heme-binding and radical-scavenging activities. Removes and protects against harmful oxidants and repairs macromolecules in intravascular and extravascular spaces and in intracellular compartments. Intravascularly, plays a regulatory role in red cell homeostasis by preventing heme- and reactive oxygen species-induced cell damage. Binds and degrades free heme to protect fetal and adult red blood cells from hemolysis. Reduces extracellular methemoglobin, a Fe3+ (ferric) form of hemoglobin that cannot bind oxygen, back to the Fe2+ (ferrous) form deoxyhemoglobin, which has oxygen-carrying potential. Upon acute inflammation, inhibits oxidation of low-density lipoprotein particles by MPO and limits vascular damage. Extravascularly, protects from oxidation products formed on extracellular matrix structures and cell membranes. Catalyzes the reduction of carbonyl groups on oxidized collagen fibers and preserves cellular and extracellular matrix ultrastructures. Importantly, counteracts the oxidative damage at blood-placenta interface, preventing leakage of free fetal hemoglobin into the maternal circulation. Intracellularly, has a role in maintaining mitochondrial redox homeostasis. Bound to complex I of the respiratory chain of mitochondria, may scavenge free radicals and preserve mitochondrial ATP synthesis. Protects renal tubule epithelial cells from heme-induced oxidative damage to mitochondria. Reduces cytochrome c from Fe3+ (ferric) to the Fe2+ (ferrous) state through formation of superoxide anion radicals in the presence of ascorbate or NADH/NADPH electron donor cofactors, ascorbate being the preferred cofactor. Has a chaperone role in facilitating the correct folding of bikunin in the endoplasmic reticulum compartment. Kunitz-type serine protease inhibitor and structural component of extracellular matrix with a role in extracellular space remodeling and cell adhesion. Among others, has antiprotease activity toward kallikrein, a protease involved in airway inflammation; inhibits GZMK/granzyme, a granule-stored serine protease involved in NK and T cell cytotoxic responses; and inhibits PLG/plasmin, a protease required for activation of matrix metalloproteinases. As part of I-alpha-I complex, provides for the heavy chains to be transferred from I-alpha-I complex to hyaluronan in the presence of TNFAIP6, in a dynamic process that releases free bikunin and remodels extracellular matrix proteoglycan structures. Free bikunin, but not its heavy chain-bound form, acts as a potent protease inhibitor in airway secretions. Part of hyaluronan-rich extracellular matrix that surrounds oocyte during cumulus oophorus expansion, an indispensable process for proper ovulation. Also inhibits calcium oxalate crystallization. Functionally, kunitz-type serine protease inhibitor. Has high catalytic efficiency for F10/blood coagulation factor Xa and may act as an anticoagulant by inhibiting prothrombin activation. Inhibits trypsin and mast cell CMA1/chymase and tryptase proteases. This chain is Protein AMBP (AMBP), found in Mesocricetus auratus (Golden hamster).